Reading from the N-terminus, the 1026-residue chain is uncharacterized protein (1026 aa).

WD repeat units follow at residues 14 to 53, 62 to 104, 148 to 187, and 937 to 977; these read LLDEGLDVSSIHCFDQYLIVGQCSGQVMVFDVSTDNHFTL, HSVS…RRAT, GHEDWPILFPFKDEALLIPVAYSDGSVSLWSVDWSALTFK, and NAEC…VKFL.

The protein localises to the cytoplasm. Its subcellular location is the nucleus. This is an uncharacterized protein from Schizosaccharomyces pombe (strain 972 / ATCC 24843) (Fission yeast).